The primary structure comprises 109 residues: Large ribosomal subunit protein uL23 (109 aa).

It belongs to the universal ribosomal protein uL23 family. As to quaternary structure, part of the 50S ribosomal subunit. Contacts protein L29, and trigger factor when it is bound to the ribosome.

In terms of biological role, one of the early assembly proteins it binds 23S rRNA. One of the proteins that surrounds the polypeptide exit tunnel on the outside of the ribosome. Forms the main docking site for trigger factor binding to the ribosome. The sequence is that of Large ribosomal subunit protein uL23 from Haemophilus influenzae (strain PittEE).